Here is a 1077-residue protein sequence, read N- to C-terminus: Bifunctional helicase and thymine dioxygenase JBP2 (1077 aa).

The tract at residues 1–516 (MPMFMDGASQ…PPLCIPFKIA (516 aa)) is thymine dioxygenase. Residues His-391, Asp-393, and His-441 each contribute to the Fe cation site. Arg-455 provides a ligand contact to 2-oxoglutarate. Positions 517–1075 (KTLSLTQHAA…RNIDTVKSER (559 aa)) are DNA Helicase. Positions 531-706 (SRRIKEGDGC…YRLVGWVDDK (176 aa)) constitute a Helicase ATP-binding domain. 544–551 (LTMGLGKT) provides a ligand contact to ATP. The DEAH box motif lies at 657-660 (DEGH). A Helicase C-terminal domain is found at 871 to 1032 (KLTALISILH…QVVPGHDLVD (162 aa)).

This sequence in the C-terminal section; belongs to the SNF2/RAD54 helicase family. In the N-terminal section; belongs to the TET family. JBP2 subfamily. It depends on Fe(2+) as a cofactor.

The protein localises to the nucleus. It carries out the reaction ATP + H2O = ADP + phosphate + H(+). It catalyses the reaction thymine + 2-oxoglutarate + O2 = 5-hydroxymethyluracil + succinate + CO2. Dioxygenase that catalyzes the first step of DNA base J (beta-d-glucosyl-HOMedU) biosynthesis by converting thymine to 5-hydroxymethyluracil (HOMedU). DNA base J is a hypermodified thymidine residue found in the genome of kinetoplastid parasites, which is localized primarily to repetitive DNA, namely the telomeres, and is implicated in the regulation of antigenic variation. Probably also acts as a DNA helicase. Recognizes and binds specific regions of the genome, hydrolyzes ATP and allows the DNA base J de novo synthesis. Involved in initial synthesis of DNA base J, JBP1 being able to act via the basal level of DNA base J and propagate further synthesis. In contrast to JBP1, it does not specifically bind DNA base J, however it binds chromatin. The sequence is that of Bifunctional helicase and thymine dioxygenase JBP2 (JBP2) from Trypanosoma brucei brucei (strain 927/4 GUTat10.1).